Here is a 272-residue protein sequence, read N- to C-terminus: NAD kinase (272 aa).

The active-site Proton acceptor is the D62. Residues 62-63 (DG), R67, 129-130 (NE), R140, K157, D159, I167, 170-175 (SSYSSS), A194, and Q229 each bind NAD(+).

Belongs to the NAD kinase family. A divalent metal cation serves as cofactor.

It localises to the cytoplasm. The catalysed reaction is NAD(+) + ATP = ADP + NADP(+) + H(+). In terms of biological role, involved in the regulation of the intracellular balance of NAD and NADP, and is a key enzyme in the biosynthesis of NADP. Catalyzes specifically the phosphorylation on 2'-hydroxyl of the adenosine moiety of NAD to yield NADP. This Thermoplasma acidophilum (strain ATCC 25905 / DSM 1728 / JCM 9062 / NBRC 15155 / AMRC-C165) protein is NAD kinase.